The sequence spans 365 residues: MSKPAVKSVQSATAKTATRAVNIRQKVKAPKQAKPEAKGRVRPSKDKPRVEIKKALHPRNAHLNGYDFPALISAFPQLKTFVRPTPYGALSVDFADPLAVKTLNAALLKHHYGIGSWNIPEGALCPPIPGRVDYVHYVADLLAEGDKSCAMDKARVLDIGTGANGIYPILGCQVYGWQYVASDINAHSLTNVQSIIEQNPVLQGRISLRLQPDDKAVFKGVIQAEERFELTLCNPPFHASMAEASEGTKRKVNNLQLNRGSSVKAAPKLNFGGQAAELWCQGGERQFLATMIRESQMFADQCLWFTSLVSKQENLKPCYQALAQLNVDTVKTIEMQQGNKITRVLAWSFQSAAKRKLWRAEHLAN.

The disordered stretch occupies residues 1–49; that stretch reads MSKPAVKSVQSATAKTATRAVNIRQKVKAPKQAKPEAKGRVRPSKDKPR. The segment covering 33–49 has biased composition (basic and acidic residues); that stretch reads AKPEAKGRVRPSKDKPR.

It belongs to the methyltransferase superfamily. METTL16/RlmF family.

It is found in the cytoplasm. It catalyses the reaction adenosine(1618) in 23S rRNA + S-adenosyl-L-methionine = N(6)-methyladenosine(1618) in 23S rRNA + S-adenosyl-L-homocysteine + H(+). Its function is as follows. Specifically methylates the adenine in position 1618 of 23S rRNA. The polypeptide is Ribosomal RNA large subunit methyltransferase F (Shewanella baltica (strain OS185)).